The following is a 288-amino-acid chain: HTH-type transcriptional regulator CzcR (288 aa).

An HTH lysR-type domain is found at 1-58 (MELRDLQIFQSVADQGSVSSAAKELNYVQSNVTTRIKQLENELKTPLFYRHKRGMTLT). A DNA-binding region (H-T-H motif) is located at residues 18–37 (VSSAAKELNYVQSNVTTRIK).

It belongs to the LysR transcriptional regulatory family.

The chain is HTH-type transcriptional regulator CzcR (czcR) from Bacillus thuringiensis subsp. konkukian (strain 97-27).